The sequence spans 265 residues: Energy-coupling factor transporter transmembrane protein EcfT (265 aa).

The next 5 helical transmembrane spans lie at 29–49, 73–93, 110–130, 143–163, and 242–262; these read IILF…AILI, VWIL…GGTV, AIFI…LTLT, LLGP…MMSI, and FTWR…VIGW.

Belongs to the energy-coupling factor EcfT family. Forms a stable energy-coupling factor (ECF) transporter complex composed of 2 membrane-embedded substrate-binding proteins (S component), 2 ATP-binding proteins (A component) and 2 transmembrane proteins (T component). May be able to interact with more than 1 S component at a time.

It localises to the cell membrane. In terms of biological role, transmembrane (T) component of an energy-coupling factor (ECF) ABC-transporter complex. Unlike classic ABC transporters this ECF transporter provides the energy necessary to transport a number of different substrates. This Brevibacillus brevis (strain 47 / JCM 6285 / NBRC 100599) protein is Energy-coupling factor transporter transmembrane protein EcfT.